Reading from the N-terminus, the 192-residue chain is Ion-translocating oxidoreductase complex subunit B (192 aa).

The hydrophobic stretch occupies residues 1–26 (MNAIWIAVAAVSLLALAFGAILGYAS). A 4Fe-4S domain is found at 32 to 91 (EDDPVVEKIDEILPQSQCGQCGYPGCRPYAEAISCNGEKINRCAPGGEAVMLKIAELLNV). Cys-49, Cys-52, Cys-57, Cys-74, Cys-117, Cys-120, Cys-123, Cys-127, Cys-147, Cys-150, Cys-153, and Cys-157 together coordinate [4Fe-4S] cluster. 4Fe-4S ferredoxin-type domains are found at residues 108-137 (MVAV…GATR) and 138-167 (AMHT…LQPV).

Belongs to the 4Fe4S bacterial-type ferredoxin family. RnfB subfamily. The complex is composed of six subunits: RsxA, RsxB, RsxC, RsxD, RsxE and RsxG. [4Fe-4S] cluster is required as a cofactor.

The protein localises to the cell inner membrane. Part of a membrane-bound complex that couples electron transfer with translocation of ions across the membrane. Required to maintain the reduced state of SoxR. The sequence is that of Ion-translocating oxidoreductase complex subunit B from Escherichia coli O81 (strain ED1a).